A 133-amino-acid chain; its full sequence is MPEETLLAFDFGEKKIGIAIGNTLTRQARPLEIIFSETRAARFGRIGQLLQEWQPQRAVVGLPLTLDGQEQPASARARRFANQLHGRFGLAVELVDERGSSMEAQQLLGTHAADDAVAAAVILQRYLDTLPQP.

It belongs to the YqgF nuclease family.

It is found in the cytoplasm. Functionally, could be a nuclease involved in processing of the 5'-end of pre-16S rRNA. The protein is Putative pre-16S rRNA nuclease of Bordetella bronchiseptica (strain ATCC BAA-588 / NCTC 13252 / RB50) (Alcaligenes bronchisepticus).